An 82-amino-acid chain; its full sequence is UPF0180 protein BC_1394 (82 aa).

This sequence belongs to the UPF0180 family.

The polypeptide is UPF0180 protein BC_1394 (Bacillus cereus (strain ATCC 14579 / DSM 31 / CCUG 7414 / JCM 2152 / NBRC 15305 / NCIMB 9373 / NCTC 2599 / NRRL B-3711)).